The chain runs to 601 residues: Glutathione-regulated potassium-efflux system protein KefB (601 aa).

The next 13 helical transmembrane spans lie at 4 to 24, 29 to 49, 55 to 75, 87 to 107, 115 to 135, 152 to 172, 177 to 197, 207 to 227, 230 to 250, 268 to 288, 291 to 311, 324 to 344, and 356 to 376; these read SDFL…VPLA, IGAV…GLGF, EILH…GLEL, IFGV…GLLM, AAVV…LQLM, VLLF…LLAG, HFDW…LIGG, FIAA…LVLG, LFMD…GVLL, GLLL…GVLY, LLWV…VLYL, MQFA…FSTA, and ALLL…MKLV. The RCK N-terminal domain occupies 400–519; that stretch reads KPQVIVVGFG…AGVTQFSRET (120 aa).

The protein belongs to the monovalent cation:proton antiporter 2 (CPA2) transporter (TC 2.A.37) family. KefB subfamily. As to quaternary structure, interacts with the regulatory subunit KefG.

It localises to the cell inner membrane. Activated by adducts between glutathione and electrophiles. Functionally, pore-forming subunit of a potassium efflux system that confers protection against electrophiles. Catalyzes K(+)/H(+) antiport. This Escherichia coli (strain K12) protein is Glutathione-regulated potassium-efflux system protein KefB.